Consider the following 343-residue polypeptide: Protease HtpX homolog (343 aa).

The next 2 membrane-spanning stretches (helical) occupy residues 7-24 and 29-46; these read TMLL…GYLV and GMVV…FSYW. H130 contributes to the Zn(2+) binding site. E131 is a catalytic residue. H134 is a binding site for Zn(2+). Helical transmembrane passes span 145-165 and 177-197; these read LTAT…LMGM and GAGM…AMLV. Position 206 (E206) interacts with Zn(2+). The disordered stretch occupies residues 308–343; sequence NLEDEDLNPEAQNGFTHNQKKKTVRRGKDRPTWLRH. Over residues 325 to 335 the composition is skewed to basic residues; it reads NQKKKTVRRGK.

Belongs to the peptidase M48B family. It depends on Zn(2+) as a cofactor.

The protein resides in the cell inner membrane. The polypeptide is Protease HtpX homolog (Bartonella bacilliformis (strain ATCC 35685 / KC583 / Herrer 020/F12,63)).